We begin with the raw amino-acid sequence, 170 residues long: MVRKPNSMYRNLAKKAYTRKEYMGGIPGVKVVHFDMGNLTSEFPMEVSLVVDESCQIRHSALEAARMSINRKLNKELGRMNYHLKLRTYPHHVLRENKQATGAGADRVSQGMRLAFGKAVGTAARCQQNQKIFTVFSNPASVEKIKDALRHGGHKLPSPTHLVIEMKQES.

This sequence belongs to the universal ribosomal protein uL16 family.

The chain is Large ribosomal subunit protein uL16 from Methanospirillum hungatei JF-1 (strain ATCC 27890 / DSM 864 / NBRC 100397 / JF-1).